The chain runs to 89 residues: Inner kinetochore subunit mhf2 (89 aa).

Belongs to the CENP-X/MHF2 family. As to quaternary structure, the MHF histone-fold complex is a heterotetramer of 2 mhf1-mhf2 heterodimers. Component of the inner kinetochore constitutive centromere-associated network (CCAN) (also known as central kinetochore Sim4 complex in fission yeast), which is composed of at least cnl2, cnp3, cnp20, fta1, fta2, fta3, fta4, fta6, fta7, mal2, mhf1, mhf2, mis6, mis15, mis17, sim4 and wip1.

It is found in the nucleus. It localises to the cytoplasm. Functionally, component of a FANCM-MHF complex that promotes gene conversion at blocked replication forks, probably by reversal of the stalled fork. FANCM-MHF promotes non-crossover recombination. This Schizosaccharomyces pombe (strain 972 / ATCC 24843) (Fission yeast) protein is Inner kinetochore subunit mhf2.